We begin with the raw amino-acid sequence, 266 residues long: Proline-rich protein 23A (266 aa).

Residues 1-18 (MGSRPRSPSAFPAPWWGQ) show a composition bias toward low complexity. Disordered regions lie at residues 1–47 (MGSR…SLED) and 197–266 (EPCA…LFQE). Pro residues predominate over residues 227–238 (PSSPLQPLPPSP). A compositionally biased stretch (basic residues) spans 255–266 (PPCKARRRLFQE).

It belongs to the PRR23 family.

This chain is Proline-rich protein 23A (PRR23A), found in Homo sapiens (Human).